We begin with the raw amino-acid sequence, 162 residues long: MFDIGFLEIIVIMVIALIVIGPERMPEVARKIGQFMGKTKRFINSMKENSEITETVRDLQNSMNLEEEKRNLESVSDTLHDDFSKIQDEFGIDQEISRPFDADEPTAFSGTQFNKAPTQPKMPTTEESPSSTPETSTKETEKTSTSDVSAPSESTPESSNKS.

The helical transmembrane segment at 1 to 21 (MFDIGFLEIIVIMVIALIVIG) threads the bilayer. A disordered region spans residues 86 to 162 (IQDEFGIDQE…ESTPESSNKS (77 aa)). Polar residues predominate over residues 108–117 (FSGTQFNKAP). A compositionally biased stretch (low complexity) spans 123-135 (PTTEESPSSTPET). Residues 147-162 (DVSAPSESTPESSNKS) show a composition bias toward polar residues.

It belongs to the TatB family. The Tat system comprises two distinct complexes: a TatABC complex, containing multiple copies of TatA, TatB and TatC subunits, and a separate TatA complex, containing only TatA subunits. Substrates initially bind to the TatABC complex, which probably triggers association of the separate TatA complex to form the active translocon.

It localises to the cell inner membrane. In terms of biological role, part of the twin-arginine translocation (Tat) system that transports large folded proteins containing a characteristic twin-arginine motif in their signal peptide across membranes. Together with TatC, TatB is part of a receptor directly interacting with Tat signal peptides. TatB may form an oligomeric binding site that transiently accommodates folded Tat precursor proteins before their translocation. This Hydrogenovibrio crunogenus (strain DSM 25203 / XCL-2) (Thiomicrospira crunogena) protein is Sec-independent protein translocase protein TatB.